Reading from the N-terminus, the 85-residue chain is Progonadoliberin-2 (85 aa).

A signal peptide spans 1–23; sequence MCVSRLVLLFGLLLCVGAQLSNA. Pyrrolidone carboxylic acid is present on Gln-24. Gly-33 bears the Glycine amide mark.

The protein belongs to the GnRH family.

The protein localises to the secreted. Functionally, stimulates the secretion of gonadotropins. This chain is Progonadoliberin-2 (gnrh2), found in Morone saxatilis (Striped bass).